The primary structure comprises 141 residues: Large ribosomal subunit protein uL14 (141 aa).

Belongs to the universal ribosomal protein uL14 family. Part of the 50S ribosomal subunit. Forms a cluster with proteins L3 and L24e, part of which may contact the 16S rRNA in 2 intersubunit bridges.

In terms of biological role, binds to 23S rRNA. Forms part of two intersubunit bridges in the 70S ribosome. This Pyrococcus furiosus (strain ATCC 43587 / DSM 3638 / JCM 8422 / Vc1) protein is Large ribosomal subunit protein uL14.